A 767-amino-acid polypeptide reads, in one-letter code: Mst2 complex subunit nto1 (767 aa).

The PHD-type 1 zinc finger occupies 194–244; that stretch reads DGRCVICNEAECENSNAIVFCDNCNTSVHQNCYGIPFVPEGQWFCKKCLLA. A C2HC pre-PHD-type zinc finger spans residues 248–281; sequence VICCAFCPDRDGAFCTTLDGRWCHTICAIAIPEI. Residues 305 to 363 form a PHD-type 2 zinc finger; sequence LVCCICKLRWGTCVQCSDKNCYAAYHITCARRAGFFYKIYSHSASYDSVDMETYCDKHT. Positions 724-752 are enriched in polar residues; the sequence is VTGQSNHALPNSVTKKNGTKQPYTKNSLP. A disordered region spans residues 724-767; sequence VTGQSNHALPNSVTKKNGTKQPYTKNSLPFNERITRSKAKKNYS.

Component of the mst2 complex composed of at least eaf6, mst2, nto1, pdp3, ptf1, ptf2 and tfg3.

The protein localises to the cytoplasm. It is found in the nucleus. Component of the mst2 complex which is a highly specific H3 lysine 14 (H3K14) acetyltransferase that functions together with gcn5 to regulate global levels of H3K14 acetylation (H3K14ac), critical for DNA damage checkpoint activation. The protein is Mst2 complex subunit nto1 (nto1) of Schizosaccharomyces pombe (strain 972 / ATCC 24843) (Fission yeast).